A 236-amino-acid chain; its full sequence is 2,3,4,5-tetrahydropyridine-2,6-dicarboxylate N-acetyltransferase (236 aa).

It belongs to the transferase hexapeptide repeat family. DapH subfamily.

The catalysed reaction is (S)-2,3,4,5-tetrahydrodipicolinate + acetyl-CoA + H2O = L-2-acetamido-6-oxoheptanedioate + CoA. Its pathway is amino-acid biosynthesis; L-lysine biosynthesis via DAP pathway; LL-2,6-diaminopimelate from (S)-tetrahydrodipicolinate (acetylase route): step 1/3. Functionally, catalyzes the transfer of an acetyl group from acetyl-CoA to tetrahydrodipicolinate. The sequence is that of 2,3,4,5-tetrahydropyridine-2,6-dicarboxylate N-acetyltransferase from Geobacillus sp. (strain WCH70).